A 320-amino-acid chain; its full sequence is Probable cell division protein WhiA (320 aa).

A DNA-binding region (H-T-H motif) is located at residues 276-310 (TLKELGEMVAGGKISKSGINHRLRKIDEIAERLRA).

The protein belongs to the WhiA family.

In terms of biological role, involved in cell division and chromosome segregation. This Geobacillus thermodenitrificans (strain NG80-2) protein is Probable cell division protein WhiA.